Consider the following 353-residue polypeptide: Putative transport protein YrrI (353 aa).

The next 8 membrane-spanning stretches (helical) occupy residues Leu-8–Leu-28, Leu-37–Leu-57, Ile-77–Ile-97, Phe-165–Met-185, Leu-220–Pro-240, Leu-243–Gly-263, Leu-269–Leu-289, and Val-311–Leu-331.

The protein belongs to the autoinducer-2 exporter (AI-2E) (TC 2.A.86) family.

It localises to the cell membrane. The polypeptide is Putative transport protein YrrI (yrrI) (Bacillus subtilis (strain 168)).